We begin with the raw amino-acid sequence, 311 residues long: tRNA-cytidine(32) 2-sulfurtransferase (311 aa).

The short motif at 47 to 52 is the PP-loop motif element; it reads SGGKDS. [4Fe-4S] cluster-binding residues include C122, C125, and C213.

The protein belongs to the TtcA family. Homodimer. Mg(2+) is required as a cofactor. [4Fe-4S] cluster serves as cofactor.

The protein resides in the cytoplasm. It carries out the reaction cytidine(32) in tRNA + S-sulfanyl-L-cysteinyl-[cysteine desulfurase] + AH2 + ATP = 2-thiocytidine(32) in tRNA + L-cysteinyl-[cysteine desulfurase] + A + AMP + diphosphate + H(+). Its pathway is tRNA modification. In terms of biological role, catalyzes the ATP-dependent 2-thiolation of cytidine in position 32 of tRNA, to form 2-thiocytidine (s(2)C32). The sulfur atoms are provided by the cysteine/cysteine desulfurase (IscS) system. The polypeptide is tRNA-cytidine(32) 2-sulfurtransferase (Salmonella typhi).